Reading from the N-terminus, the 345-residue chain is MLTERQLLIFRAIIDHFTWTIQPVGSKNLLKEKGLPYSSATIRNEMGVLEEYGFIEKTHSSSGRVPSEKGYRFYVDYLLQPKKLDKSDRQMIRSFFSENYYEMEGLIQNSALMLSDLTNYTSILLGPEATKNHLSGFRFVPINNFQAMLILITDQGHVDNHLVTIPEGTTLSDIERMVNILNERLVGLSLDDLKVQIPMEVKELLGKHVRNYESFMHVFSDSFAQASQQKVYFGGKTNILNQPEFHDINKVREMLHLMEEEQDVYELFRDIPDGLQVKIGRENNNSLMEDCSIITATYNIAGERVGGIVLLGPTRMEYSRMMGLVDVMSRDLTDVLTKLYRDNQN.

The protein belongs to the HrcA family.

Negative regulator of class I heat shock genes (grpE-dnaK-dnaJ and groELS operons). Prevents heat-shock induction of these operons. This chain is Heat-inducible transcription repressor HrcA, found in Listeria monocytogenes serotype 1/2a (strain 10403S).